Reading from the N-terminus, the 421-residue chain is Acetate kinase (421 aa).

A Mg(2+)-binding site is contributed by N7. An ATP-binding site is contributed by K14. R91 contributes to the substrate binding site. D148 acts as the Proton donor/acceptor in catalysis. Residues H208 to G212 and D283 to R285 contribute to the ATP site. E387 serves as a coordination point for Mg(2+).

This sequence belongs to the acetokinase family. Homodimer. Requires Mg(2+) as cofactor. It depends on Mn(2+) as a cofactor.

The protein localises to the cytoplasm. The enzyme catalyses acetate + ATP = acetyl phosphate + ADP. It participates in metabolic intermediate biosynthesis; acetyl-CoA biosynthesis; acetyl-CoA from acetate: step 1/2. Its function is as follows. Catalyzes the formation of acetyl phosphate from acetate and ATP. Can also catalyze the reverse reaction. The polypeptide is Acetate kinase (Geobacter metallireducens (strain ATCC 53774 / DSM 7210 / GS-15)).